We begin with the raw amino-acid sequence, 443 residues long: Probable glycine dehydrogenase (decarboxylating) subunit 1 (443 aa).

The protein belongs to the GcvP family. N-terminal subunit subfamily. The glycine cleavage system is composed of four proteins: P, T, L and H. In this organism, the P 'protein' is a heterodimer of two subunits.

It carries out the reaction N(6)-[(R)-lipoyl]-L-lysyl-[glycine-cleavage complex H protein] + glycine + H(+) = N(6)-[(R)-S(8)-aminomethyldihydrolipoyl]-L-lysyl-[glycine-cleavage complex H protein] + CO2. The glycine cleavage system catalyzes the degradation of glycine. The P protein binds the alpha-amino group of glycine through its pyridoxal phosphate cofactor; CO(2) is released and the remaining methylamine moiety is then transferred to the lipoamide cofactor of the H protein. This chain is Probable glycine dehydrogenase (decarboxylating) subunit 1, found in Solidesulfovibrio magneticus (strain ATCC 700980 / DSM 13731 / RS-1) (Desulfovibrio magneticus).